The following is a 141-amino-acid chain: Putative antiporter subunit mnhB2 (141 aa).

Helical transmembrane passes span 10-30 (TVTK…FLAG), 35-55 (GGGF…FLAF), 70-90 (ILMI…MFFG), and 116-136 (VFEA…MLSI).

The protein belongs to the CPA3 antiporters (TC 2.A.63) subunit B family. As to quaternary structure, may form a heterooligomeric complex that consists of seven subunits: mnhA2, mnhB2, mnhC2, mnhD2, mnhE2, mnhF2 and mnhG2.

It is found in the cell membrane. This chain is Putative antiporter subunit mnhB2 (mnhB2), found in Staphylococcus saprophyticus subsp. saprophyticus (strain ATCC 15305 / DSM 20229 / NCIMB 8711 / NCTC 7292 / S-41).